We begin with the raw amino-acid sequence, 658 residues long: MPRIAALPDHLVNQIAAGEVVERPANALKEIVENSIDAGATAVDVELEGGGIRLIRVGDNGGGIHPDDIELALHRHATSKIKTLNDLEHVASMGFRGEGLASIASVSRLTLTSRQEDSSHATQVKAEDGKLSSPTAAAHPVGTTIEAAELFFNTPARRKFLKSENTEYAHCATMLERLALAHPHIAFSLKRDGKQVFKLPAQSLHERIAAIVGDDFQTASLEIDSGNSALRLYGAIAKPTFAKGKTDKQYCFVNHRFVRDKVMLHAVKQAYRDVLHNALTPAFVLFLELPPEAVDVNVHPTKTEIRFRDSRQVHQLVFHTLNKALADTRANLTESVSNAGEVLHDITGVTPAPMPSENDGENLFDSASNHPTGNKPDTRNAFGSSGKTAPMPYQAARAPQQHSLSLRESRAAMDTYAELYKKTDDIDLELSQFEQARFGNMPSETPAHKTDTPLSDGIPSQSELPPLGFAIAQLLGIYILAQAEDSLLLIDMHAAAERVNYEKMKRQRQENGNLQSQHLLIPVTFAASHEECAALADHAETLAGFGLELSDMGGNTLAVRAAPVMLGKSDVVSLARDVLGELAQVGSSQTIASHENRILATMSCHGSIRAGRRLTLPEMNALLRDMENTPRSNQCNHGRPTWVKLTLKELDTLFLRGQ.

The span at 114–130 (RQEDSSHATQVKAEDGK) shows a compositional bias: basic and acidic residues. Disordered stretches follow at residues 114 to 138 (RQED…TAAA) and 355 to 405 (PSEN…HSLS).

This sequence belongs to the DNA mismatch repair MutL/HexB family.

This protein is involved in the repair of mismatches in DNA. It is required for dam-dependent methyl-directed DNA mismatch repair. May act as a 'molecular matchmaker', a protein that promotes the formation of a stable complex between two or more DNA-binding proteins in an ATP-dependent manner without itself being part of a final effector complex. This Neisseria gonorrhoeae (strain ATCC 700825 / FA 1090) protein is DNA mismatch repair protein MutL.